A 123-amino-acid chain; its full sequence is MFSCLLHSSRPTDSYCTLAAPLSQTARTRTMTFHAATAKRKTEHSGIKESNLHLSRVLLSSFCRAKGRFVSFFICYPFPFGLTRFPRVLWSIGLDKSLFTRVHFSPSFFSLLAPLQFSGIVRS.

This is an uncharacterized protein from Saccharomyces cerevisiae (strain ATCC 204508 / S288c) (Baker's yeast).